The following is a 443-amino-acid chain: 3-isopropylmalate dehydratase large subunit (443 aa).

[4Fe-4S] cluster-binding residues include Cys347, Cys407, and Cys410.

It belongs to the aconitase/IPM isomerase family. LeuC type 1 subfamily. Heterodimer of LeuC and LeuD. It depends on [4Fe-4S] cluster as a cofactor.

The enzyme catalyses (2R,3S)-3-isopropylmalate = (2S)-2-isopropylmalate. The protein operates within amino-acid biosynthesis; L-leucine biosynthesis; L-leucine from 3-methyl-2-oxobutanoate: step 2/4. Catalyzes the isomerization between 2-isopropylmalate and 3-isopropylmalate, via the formation of 2-isopropylmaleate. The chain is 3-isopropylmalate dehydratase large subunit from Buchnera aphidicola subsp. Uroleucon sonchi.